Here is a 142-residue protein sequence, read N- to C-terminus: ATP synthase F(0) complex subunit C3, mitochondrial (142 aa).

A mitochondrion-targeting transit peptide spans 1–67 (MFACAKLACT…REFQTSAISR (67 aa)). The helical transmembrane segment at 83 to 103 (VGVAGSGAGIGTVFGSLIIGY) threads the bilayer. Lys110 is modified (N6,N6,N6-trimethyllysine). The helical transmembrane segment at 118–138 (ILGFALSEAMGLFCLMVAFLI) threads the bilayer.

This sequence belongs to the ATPase C chain family. As to quaternary structure, F-type ATPases have 2 components, CF(1) - the catalytic core - and CF(0) - the membrane proton channel. CF(1) has five subunits: alpha(3), beta(3), gamma(1), delta(1), epsilon(1). CF(0) has three main subunits: a, b and c. Interacts with TMEM70 and TMEM242. Post-translationally, trimethylated by ATPSCKMT at Lys-110. Methylation is required for proper incorporation of the C subunit into the ATP synthase complex and mitochondrial respiration.

The protein localises to the mitochondrion membrane. Mitochondrial membrane ATP synthase (F(1)F(0) ATP synthase or Complex V) produces ATP from ADP in the presence of a proton gradient across the membrane which is generated by electron transport complexes of the respiratory chain. F-type ATPases consist of two structural domains, F(1) - containing the extramembraneous catalytic core and F(0) - containing the membrane proton channel, linked together by a central stalk and a peripheral stalk. During catalysis, ATP synthesis in the catalytic domain of F(1) is coupled via a rotary mechanism of the central stalk subunits to proton translocation. Part of the complex F(0) domain. A homomeric c-ring of probably 10 subunits is part of the complex rotary element. The protein is ATP synthase F(0) complex subunit C3, mitochondrial of Homo sapiens (Human).